Reading from the N-terminus, the 142-residue chain is Protein tost-1 (142 aa).

The disordered stretch occupies residues 97–123 (KVFEEEDKENAPTKKAVLKPSSTDEKK).

In terms of assembly, component of the tost-1 variant of the PETISCO complex (also called the pid-3, erh-2, tofu-6, and ife-3 small RNA complex) containing at least tost-1, tofu-6, ife-3, pid-3, and erh-2, which plays an essential role in embryogenesis. Within the complex interacts with erh-2. Within the complex interacts with pid-3 and tofu-6. In contrast to the pid-1 variant of the PETISCO complex, the tost-1 variant of the PETISCO complex plays a minor role in the biogenesis of a class of 21 nucleotide PIWI-interacting RNAs (piRNAs) that possess a uracil residue at the 5'-end (also called 21U-RNAs). As to expression, expressed in the germline.

The protein resides in the cytoplasm. It is found in the nucleus. Functionally, component of the tost-1 variant of the PETISCO complex which plays an essential role in embryogenesis. Within the complex acts as an adapter which binds to the complex via erh-2. Does not seem to play a role in the biogenesis of a class of 21 nucleotide PIWI-interacting RNAs (piRNAs) that possess a uracil residue at the 5'-end (also called 21U-RNAs). May inhibit 21U-RNA accumulation. Required for chromosome segregation and cell division in early embryos. The sequence is that of Protein tost-1 from Caenorhabditis elegans.